The following is a 1452-amino-acid chain: Pleiotropic drug resistance protein 1 (1452 aa).

Positions L152–E425 constitute an ABC transporter 1 domain. G185–T192 is a binding site for ATP. The 213-residue stretch at L504 to F716 folds into the ABC transmembrane type-2 1 domain. The next 7 helical transmembrane spans lie at F521–F541, G554–S574, I609–F629, L640–L660, I664–F684, W694–N714, and I753–L773. The segment at L808–S830 is disordered. Residues S812 to R821 are compositionally biased toward basic and acidic residues. The 253-residue stretch at I855 to D1107 folds into the ABC transporter 2 domain. G900–T907 serves as a coordination point for ATP. The 215-residue stretch at T1180 to F1394 folds into the ABC transmembrane type-2 2 domain. 7 helical membrane-spanning segments follow: residues Y1199–W1219, Y1239–I1259, L1287–F1307, F1314–M1334, I1344–V1364, W1375–G1395, and F1421–A1441.

Belongs to the ABC transporter superfamily. ABCG family. PDR (TC 3.A.1.205) subfamily. As to expression, expressed in root hypodermal passage cells. Expressed in stem tissues, particularly the vasculature and nodes adjacent to leaf axils.

Its subcellular location is the cell membrane. Cellular strigolactone (SL) transporter required for the exudation of SL from the root to the soil. The presence of SL in the vicinity of the roots is required for development of symbiotic interactions with arbuscular mycorrhizal fungi (AMF). Transports SL in the above ground tissues and is required for the control of shoot branching. SL regulates plant shoot architecture by inhibiting the outgrowth of axillary buds. Involved in the regulation of shootward and outward directional strigolactone transport in roots. Due to its polar localization in root cells, mediates directional shootward strigolactone transport, as well as localized outward directional transport for exudation to the soil. The chain is Pleiotropic drug resistance protein 1 from Petunia axillaris (Large white petunia).